The chain runs to 377 residues: Phosphoserine aminotransferase (377 aa).

R43 is a binding site for L-glutamate. Pyridoxal 5'-phosphate is bound by residues W105, T164, D189, and Q212. Residue K213 is modified to N6-(pyridoxal phosphate)lysine. 254–255 is a pyridoxal 5'-phosphate binding site; it reads NT.

The protein belongs to the class-V pyridoxal-phosphate-dependent aminotransferase family. SerC subfamily. In terms of assembly, homodimer. The cofactor is pyridoxal 5'-phosphate.

The protein resides in the cytoplasm. The catalysed reaction is O-phospho-L-serine + 2-oxoglutarate = 3-phosphooxypyruvate + L-glutamate. It catalyses the reaction 4-(phosphooxy)-L-threonine + 2-oxoglutarate = (R)-3-hydroxy-2-oxo-4-phosphooxybutanoate + L-glutamate. The protein operates within amino-acid biosynthesis; L-serine biosynthesis; L-serine from 3-phospho-D-glycerate: step 2/3. It participates in cofactor biosynthesis; pyridoxine 5'-phosphate biosynthesis; pyridoxine 5'-phosphate from D-erythrose 4-phosphate: step 3/5. Functionally, catalyzes the reversible conversion of 3-phosphohydroxypyruvate to phosphoserine and of 3-hydroxy-2-oxo-4-phosphonooxybutanoate to phosphohydroxythreonine. This is Phosphoserine aminotransferase from Bordetella pertussis (strain Tohama I / ATCC BAA-589 / NCTC 13251).